The primary structure comprises 388 residues: tRNA(Ile)-lysidine synthase (388 aa).

51 to 56 (SGGRDS) serves as a coordination point for ATP.

The protein belongs to the tRNA(Ile)-lysidine synthase family.

Its subcellular location is the cytoplasm. It catalyses the reaction cytidine(34) in tRNA(Ile2) + L-lysine + ATP = lysidine(34) in tRNA(Ile2) + AMP + diphosphate + H(+). Ligates lysine onto the cytidine present at position 34 of the AUA codon-specific tRNA(Ile) that contains the anticodon CAU, in an ATP-dependent manner. Cytidine is converted to lysidine, thus changing the amino acid specificity of the tRNA from methionine to isoleucine. The polypeptide is tRNA(Ile)-lysidine synthase (Bifidobacterium longum subsp. infantis (strain ATCC 15697 / DSM 20088 / JCM 1222 / NCTC 11817 / S12)).